A 364-amino-acid polypeptide reads, in one-letter code: Chorismate synthase (364 aa).

Residues arginine 48 and arginine 54 each coordinate NADP(+). FMN contacts are provided by residues 130 to 132 (RSS), 242 to 243 (NA), glycine 287, 302 to 306 (KPTSS), and arginine 328.

The protein belongs to the chorismate synthase family. As to quaternary structure, homotetramer. It depends on FMNH2 as a cofactor.

It catalyses the reaction 5-O-(1-carboxyvinyl)-3-phosphoshikimate = chorismate + phosphate. Its pathway is metabolic intermediate biosynthesis; chorismate biosynthesis; chorismate from D-erythrose 4-phosphate and phosphoenolpyruvate: step 7/7. Functionally, catalyzes the anti-1,4-elimination of the C-3 phosphate and the C-6 proR hydrogen from 5-enolpyruvylshikimate-3-phosphate (EPSP) to yield chorismate, which is the branch point compound that serves as the starting substrate for the three terminal pathways of aromatic amino acid biosynthesis. This reaction introduces a second double bond into the aromatic ring system. This Allorhizobium ampelinum (strain ATCC BAA-846 / DSM 112012 / S4) (Agrobacterium vitis (strain S4)) protein is Chorismate synthase.